A 352-amino-acid polypeptide reads, in one-letter code: Ferredoxin--NADP reductase 2 (352 aa).

Glu-36, Lys-44, Tyr-48, Ile-88, Leu-123, Asp-290, and Ser-331 together coordinate FAD.

Belongs to the ferredoxin--NADP reductase type 2 family. In terms of assembly, homodimer. FAD is required as a cofactor.

The enzyme catalyses 2 reduced [2Fe-2S]-[ferredoxin] + NADP(+) + H(+) = 2 oxidized [2Fe-2S]-[ferredoxin] + NADPH. The sequence is that of Ferredoxin--NADP reductase 2 from Exiguobacterium sibiricum (strain DSM 17290 / CCUG 55495 / CIP 109462 / JCM 13490 / 255-15).